A 439-amino-acid polypeptide reads, in one-letter code: Glutamate--tRNA ligase 1 (439 aa).

Positions 6–16 (PSPTGDMHIGN) match the 'HIGH' region motif. The short motif at 232 to 236 (KMSKR) is the 'KMSKS' region element. Lysine 235 lines the ATP pocket.

The protein belongs to the class-I aminoacyl-tRNA synthetase family. Glutamate--tRNA ligase type 1 subfamily. As to quaternary structure, monomer.

Its subcellular location is the cytoplasm. The catalysed reaction is tRNA(Glu) + L-glutamate + ATP = L-glutamyl-tRNA(Glu) + AMP + diphosphate. In terms of biological role, catalyzes the attachment of glutamate to tRNA(Glu) in a two-step reaction: glutamate is first activated by ATP to form Glu-AMP and then transferred to the acceptor end of tRNA(Glu). In Helicobacter acinonychis (strain Sheeba), this protein is Glutamate--tRNA ligase 1.